Reading from the N-terminus, the 335-residue chain is tRNA methyltransferase 10 homolog A (335 aa).

2 disordered regions span residues Met1 to Arg91 and Val279 to Gln335. Ser22 and Ser24 each carry phosphoserine. Residues Arg52–Lys62 show a composition bias toward basic and acidic residues. A coiled-coil region spans residues Arg52 to Ser84. Basic residues predominate over residues Glu63–Glu75. In terms of domain architecture, SAM-dependent MTase TRM10-type spans Asp88–Val279. The span at Glu304–Gln319 shows a compositional bias: basic and acidic residues. Residues Gln320–Gln335 show a composition bias toward low complexity. Ser331 carries the post-translational modification Phosphoserine.

The protein belongs to the class IV-like SAM-binding methyltransferase superfamily. TRM10 family. As to quaternary structure, interacts with tRNA. In terms of tissue distribution, ubiquitously expressed. Is more abundant in brain and pancreatic islets compared to other tissues (at protein level).

The protein resides in the nucleus. Its subcellular location is the nucleolus. It catalyses the reaction guanosine(9) in tRNA + S-adenosyl-L-methionine = N(1)-methylguanosine(9) in tRNA + S-adenosyl-L-homocysteine + H(+). Functionally, S-adenosyl-L-methionine-dependent guanine N(1)-methyltransferase that catalyzes the formation of N(1)-methylguanine at position 9 (m1G9) in tRNAs. Probably not able to catalyze formation of N(1)-methyladenine at position 9 (m1A9) in tRNAs. The polypeptide is tRNA methyltransferase 10 homolog A (Trmt10a) (Rattus norvegicus (Rat)).